We begin with the raw amino-acid sequence, 263 residues long: Small ribosomal subunit protein eS4, Y isoform 1 (263 aa).

In terms of domain architecture, S4 RNA-binding spans 42–104 (LPLIVFLRNR…TGEHFRLVYD (63 aa)).

Belongs to the eukaryotic ribosomal protein eS4 family.

The sequence is that of Small ribosomal subunit protein eS4, Y isoform 1 (RPS4Y1) from Homo sapiens (Human).